We begin with the raw amino-acid sequence, 234 residues long: Endonuclease V (234 aa).

Asp36 and Asp104 together coordinate Mg(2+).

This sequence belongs to the endonuclease V family. Mg(2+) serves as cofactor.

The protein resides in the cytoplasm. It carries out the reaction Endonucleolytic cleavage at apurinic or apyrimidinic sites to products with a 5'-phosphate.. In terms of biological role, DNA repair enzyme involved in the repair of deaminated bases. Selectively cleaves double-stranded DNA at the second phosphodiester bond 3' to a deoxyinosine leaving behind the intact lesion on the nicked DNA. In Yersinia pseudotuberculosis serotype O:1b (strain IP 31758), this protein is Endonuclease V.